The sequence spans 163 residues: Oocyte-secreted protein 1 (163 aa).

Residues 1 to 21 (MKPSSGLRGLLVLFSLTWTCA) form the signal peptide.

The protein belongs to the PLAC1 family. As to expression, oocyte-specific.

It is found in the secreted. Functionally, may be involved in cell differentiation. This is Oocyte-secreted protein 1 (OOSP1) from Bos taurus (Bovine).